We begin with the raw amino-acid sequence, 683 residues long: DNA ligase (683 aa).

Residues 29–33 (DAEFD), 79–80 (SL), and Glu109 contribute to the NAD(+) site. The active-site N6-AMP-lysine intermediate is Lys111. NAD(+)-binding residues include Arg132, Glu172, Lys288, and Lys312. Zn(2+) is bound by residues Cys406, Cys409, Cys425, and Cys431. The region spanning 595–683 (SVPRTLAGVT…GPPAEAGEPT (89 aa)) is the BRCT domain.

It belongs to the NAD-dependent DNA ligase family. LigA subfamily. Requires Mg(2+) as cofactor. Mn(2+) serves as cofactor.

The enzyme catalyses NAD(+) + (deoxyribonucleotide)n-3'-hydroxyl + 5'-phospho-(deoxyribonucleotide)m = (deoxyribonucleotide)n+m + AMP + beta-nicotinamide D-nucleotide.. Functionally, DNA ligase that catalyzes the formation of phosphodiester linkages between 5'-phosphoryl and 3'-hydroxyl groups in double-stranded DNA using NAD as a coenzyme and as the energy source for the reaction. It is essential for DNA replication and repair of damaged DNA. This chain is DNA ligase, found in Mycobacterium ulcerans (strain Agy99).